Consider the following 546-residue polypeptide: Chaperonin GroEL (546 aa).

ATP is bound by residues 29 to 32 (TLGP), 86 to 90 (DGTTT), G413, 476 to 478 (NAA), and D492. The disordered stretch occupies residues 521–546 (RPDESGNDAGAGAQGMDPSMMGGGMM).

The protein belongs to the chaperonin (HSP60) family. In terms of assembly, forms a cylinder of 14 subunits composed of two heptameric rings stacked back-to-back. Interacts with the co-chaperonin GroES.

It localises to the cytoplasm. The enzyme catalyses ATP + H2O + a folded polypeptide = ADP + phosphate + an unfolded polypeptide.. In terms of biological role, together with its co-chaperonin GroES, plays an essential role in assisting protein folding. The GroEL-GroES system forms a nano-cage that allows encapsulation of the non-native substrate proteins and provides a physical environment optimized to promote and accelerate protein folding. This Tetragenococcus halophilus (Pediococcus halophilus) protein is Chaperonin GroEL.